We begin with the raw amino-acid sequence, 392 residues long: Retrovirus-related Pol polyprotein from type-1 retrotransposable element R1 4 (392 aa).

The region spanning 1-230 (PFADDLAVLV…GGVVIRRRPE (230 aa)) is the Reverse transcriptase domain. Positions 231 to 392 (GLKENYNRVL…DEGLSSESEE (162 aa)) are nucleic acid-binding endonuclease.

The catalysed reaction is DNA(n) + a 2'-deoxyribonucleoside 5'-triphosphate = DNA(n+1) + diphosphate. This chain is Retrovirus-related Pol polyprotein from type-1 retrotransposable element R1 4, found in Nasonia vitripennis (Parasitic wasp).